The following is a 320-amino-acid chain: NAC domain-containing protein 20 (320 aa).

An NAC domain is found at 14-170 (LPPGFRFHPT…DWAVCRIFHK (157 aa)). A DNA-binding region spans residues 114–176 (IGMKKTLVFY…IFHKSSGIKK (63 aa)).

As to quaternary structure, forms homodimers. Forms heterodimers with NAC26. Expressed in developing seeds. Expressed in developing endosperm.

Its subcellular location is the nucleus. The protein resides in the endoplasmic reticulum. Its function is as follows. Transcription factor that acts redundantly with NAC26 to regulate the expression of genes involved in the biosynthesis of starch and storage proteins in grain. Directly binds to the promoters of starch synthase 1 (SS1), pullulanase (PUL), glutelin A1 (GLUA1), glutelins B4 and B5 (GLUB4 and GLUB5), alpha-globulin and 16 kDa prolamin, and activates their expression. In Oryza sativa subsp. japonica (Rice), this protein is NAC domain-containing protein 20.